Consider the following 621-residue polypeptide: tRNA uridine 5-carboxymethylaminomethyl modification enzyme MnmG (621 aa).

Residue 9–14 (GGGHAG) participates in FAD binding. Residue 270–284 (GPRYCPSIEDKIVKF) coordinates NAD(+).

This sequence belongs to the MnmG family. As to quaternary structure, homodimer. Heterotetramer of two MnmE and two MnmG subunits. The cofactor is FAD.

The protein localises to the cytoplasm. NAD-binding protein involved in the addition of a carboxymethylaminomethyl (cmnm) group at the wobble position (U34) of certain tRNAs, forming tRNA-cmnm(5)s(2)U34. The protein is tRNA uridine 5-carboxymethylaminomethyl modification enzyme MnmG of Borreliella afzelii (strain PKo) (Borrelia afzelii).